The chain runs to 64 residues: Large ribosomal subunit protein bL32 (64 aa).

Positions 1–10 are enriched in basic residues; the sequence is MAVPKRKTTP. The interval 1–22 is disordered; sequence MAVPKRKTTPSKRDMRRANHDK. Basic and acidic residues predominate over residues 11-22; the sequence is SKRDMRRANHDK.

This sequence belongs to the bacterial ribosomal protein bL32 family.

This Sorangium cellulosum (strain So ce56) (Polyangium cellulosum (strain So ce56)) protein is Large ribosomal subunit protein bL32.